The chain runs to 324 residues: Glyoxylate/hydroxypyruvate reductase B (324 aa).

Catalysis depends on residues Arg237 and Glu266. The Proton donor role is filled by His285.

It belongs to the D-isomer specific 2-hydroxyacid dehydrogenase family. GhrB subfamily. Homodimer.

It localises to the cytoplasm. The catalysed reaction is glycolate + NADP(+) = glyoxylate + NADPH + H(+). It catalyses the reaction (R)-glycerate + NAD(+) = 3-hydroxypyruvate + NADH + H(+). It carries out the reaction (R)-glycerate + NADP(+) = 3-hydroxypyruvate + NADPH + H(+). In terms of biological role, catalyzes the NADPH-dependent reduction of glyoxylate and hydroxypyruvate into glycolate and glycerate, respectively. The polypeptide is Glyoxylate/hydroxypyruvate reductase B (Shigella dysenteriae serotype 1 (strain Sd197)).